Here is a 558-residue protein sequence, read N- to C-terminus: Membrane protein insertase YidC (558 aa).

5 helical membrane-spanning segments follow: residues 3–23, 364–384, 438–458, 477–497, and 508–528; these read IKRT…FDNW, FVGN…AVFF, LPVV…LASV, PYFI…KLNP, and MMFM…GLVL.

The protein belongs to the OXA1/ALB3/YidC family. Type 1 subfamily. In terms of assembly, interacts with the Sec translocase complex via SecD. Specifically interacts with transmembrane segments of nascent integral membrane proteins during membrane integration.

It localises to the cell inner membrane. Functionally, required for the insertion and/or proper folding and/or complex formation of integral membrane proteins into the membrane. Involved in integration of membrane proteins that insert both dependently and independently of the Sec translocase complex, as well as at least some lipoproteins. Aids folding of multispanning membrane proteins. This chain is Membrane protein insertase YidC, found in Burkholderia pseudomallei (strain K96243).